A 249-amino-acid chain; its full sequence is Probable transcriptional regulatory protein LIC_12886 (249 aa).

The protein belongs to the TACO1 family.

The protein resides in the cytoplasm. This chain is Probable transcriptional regulatory protein LIC_12886, found in Leptospira interrogans serogroup Icterohaemorrhagiae serovar copenhageni (strain Fiocruz L1-130).